A 238-amino-acid chain; its full sequence is ATP synthase subunit a (238 aa).

A run of 5 helical transmembrane segments spans residues 18–38 (LTILAMSLLTITIIFILVFWA), 75–95 (YSLLMFILFSFVFIANNLGLM), 112–132 (NFGVDITLSLLVAFICHIEGI), 179–199 (VVTGLLLQLAVLSPFTGPLAF), and 203–223 (IVWTAFSMFIGFIQAYVFIIL).

It belongs to the ATPase A chain family. As to quaternary structure, F-type ATPases have 2 components, CF(1) - the catalytic core - and CF(0) - the membrane proton channel. CF(1) has five subunits: alpha(3), beta(3), gamma(1), delta(1), epsilon(1). CF(0) has three main subunits: a(1), b(2) and c(9-12). The alpha and beta chains form an alternating ring which encloses part of the gamma chain. CF(1) is attached to CF(0) by a central stalk formed by the gamma and epsilon chains, while a peripheral stalk is formed by the delta and b chains.

It is found in the cell membrane. Its function is as follows. Key component of the proton channel; it plays a direct role in the translocation of protons across the membrane. The chain is ATP synthase subunit a from Streptococcus agalactiae serotype Ia (strain ATCC 27591 / A909 / CDC SS700).